Reading from the N-terminus, the 442-residue chain is Chromosomal replication initiator protein DnaA (442 aa).

A domain I, interacts with DnaA modulators region spans residues M1–G68. The domain II stretch occupies residues G68–G104. The domain III, AAA+ region stretch occupies residues N105–A322. The ATP site is built by G150, G152, K153, and T154. The interval N323–E442 is domain IV, binds dsDNA.

This sequence belongs to the DnaA family. In terms of assembly, oligomerizes as a right-handed, spiral filament on DNA at oriC.

It localises to the cytoplasm. Its function is as follows. Plays an essential role in the initiation and regulation of chromosomal replication. ATP-DnaA binds to the origin of replication (oriC) to initiate formation of the DNA replication initiation complex once per cell cycle. Binds the DnaA box (a 9 base pair repeat at the origin) and separates the double-stranded (ds)DNA. Forms a right-handed helical filament on oriC DNA; dsDNA binds to the exterior of the filament while single-stranded (ss)DNA is stabiized in the filament's interior. The ATP-DnaA-oriC complex binds and stabilizes one strand of the AT-rich DNA unwinding element (DUE), permitting loading of DNA polymerase. After initiation quickly degrades to an ADP-DnaA complex that is not apt for DNA replication. Binds acidic phospholipids. This chain is Chromosomal replication initiator protein DnaA, found in Xanthomonas axonopodis pv. citri (strain 306).